The following is a 215-amino-acid chain: Guanylate kinase (215 aa).

The region spanning 6–185 is the Guanylate kinase-like domain; sequence GAILVLSGPS…SEKLLLSIAR (180 aa). Position 13 to 20 (13 to 20) interacts with ATP; it reads GPSGSGKS.

The protein belongs to the guanylate kinase family.

Its subcellular location is the cytoplasm. The enzyme catalyses GMP + ATP = GDP + ADP. Functionally, essential for recycling GMP and indirectly, cGMP. The protein is Guanylate kinase of Wolinella succinogenes (strain ATCC 29543 / DSM 1740 / CCUG 13145 / JCM 31913 / LMG 7466 / NCTC 11488 / FDC 602W) (Vibrio succinogenes).